Here is a 513-residue protein sequence, read N- to C-terminus: ATP synthase subunit alpha (513 aa).

Position 169-176 (169-176 (GDRQIGKT)) interacts with ATP.

Belongs to the ATPase alpha/beta chains family. As to quaternary structure, F-type ATPases have 2 components, CF(1) - the catalytic core - and CF(0) - the membrane proton channel. CF(1) has five subunits: alpha(3), beta(3), gamma(1), delta(1), epsilon(1). CF(0) has three main subunits: a(1), b(2) and c(9-12). The alpha and beta chains form an alternating ring which encloses part of the gamma chain. CF(1) is attached to CF(0) by a central stalk formed by the gamma and epsilon chains, while a peripheral stalk is formed by the delta and b chains.

The protein resides in the cell inner membrane. The catalysed reaction is ATP + H2O + 4 H(+)(in) = ADP + phosphate + 5 H(+)(out). Produces ATP from ADP in the presence of a proton gradient across the membrane. The alpha chain is a regulatory subunit. The protein is ATP synthase subunit alpha of Francisella philomiragia subsp. philomiragia (strain ATCC 25017 / CCUG 19701 / FSC 153 / O#319-036).